We begin with the raw amino-acid sequence, 197 residues long: Phosphoheptose isomerase (197 aa).

The SIS domain occupies 34 to 196; it reads MVHCLLSGNK…DHTLFPQDEQ (163 aa). A substrate-binding site is contributed by 49–51; sequence NGG. Zn(2+) is bound by residues histidine 58 and glutamate 62. Residues glutamate 62, 91 to 92, 117 to 119, serine 122, and glutamine 172 each bind substrate; these read ND and STS. Zn(2+) contacts are provided by glutamine 172 and histidine 180.

It belongs to the SIS family. GmhA subfamily. Homotetramer. It depends on Zn(2+) as a cofactor.

Its subcellular location is the cytoplasm. The enzyme catalyses 2 D-sedoheptulose 7-phosphate = D-glycero-alpha-D-manno-heptose 7-phosphate + D-glycero-beta-D-manno-heptose 7-phosphate. Its pathway is carbohydrate biosynthesis; D-glycero-D-manno-heptose 7-phosphate biosynthesis; D-glycero-alpha-D-manno-heptose 7-phosphate and D-glycero-beta-D-manno-heptose 7-phosphate from sedoheptulose 7-phosphate: step 1/1. Catalyzes the isomerization of sedoheptulose 7-phosphate in D-glycero-D-manno-heptose 7-phosphate. The sequence is that of Phosphoheptose isomerase from Shewanella halifaxensis (strain HAW-EB4).